We begin with the raw amino-acid sequence, 384 residues long: Chaperone protein DnaJ (384 aa).

A J domain is found at 5–70; it reads DYYEILGVTR…QKKRIYDTYG (66 aa). A CR-type zinc finger spans residues 134–212; it reads GTEKEIRLQT…CNGQGRTRQS (79 aa). The Zn(2+) site is built by Cys147, Cys150, Cys164, Cys167, Cys186, Cys189, Cys200, and Cys203. 4 CXXCXGXG motif repeats span residues 147–154, 164–171, 186–193, and 200–207; these read CEECNGSG, CPVCQGSG, CTRCQGMG, and CKTCNGQG. The segment at 352-384 is disordered; it reads KEKSGEKVRKWPWSKRKDREKKSMAESTREART.

This sequence belongs to the DnaJ family. Homodimer. Zn(2+) is required as a cofactor.

The protein localises to the cytoplasm. Participates actively in the response to hyperosmotic and heat shock by preventing the aggregation of stress-denatured proteins and by disaggregating proteins, also in an autonomous, DnaK-independent fashion. Unfolded proteins bind initially to DnaJ; upon interaction with the DnaJ-bound protein, DnaK hydrolyzes its bound ATP, resulting in the formation of a stable complex. GrpE releases ADP from DnaK; ATP binding to DnaK triggers the release of the substrate protein, thus completing the reaction cycle. Several rounds of ATP-dependent interactions between DnaJ, DnaK and GrpE are required for fully efficient folding. Also involved, together with DnaK and GrpE, in the DNA replication of plasmids through activation of initiation proteins. The chain is Chaperone protein DnaJ from Syntrophobacter fumaroxidans (strain DSM 10017 / MPOB).